The following is a 92-amino-acid chain: Large ribosomal subunit protein eL31 (92 aa).

The protein belongs to the eukaryotic ribosomal protein eL31 family.

The polypeptide is Large ribosomal subunit protein eL31 (Pyrobaculum arsenaticum (strain DSM 13514 / JCM 11321 / PZ6)).